The primary structure comprises 592 residues: Aspartate--tRNA ligase (592 aa).

Glutamate 176 is a binding site for L-aspartate. Residues 200-203 (QIFK) are aspartate. Arginine 222 is an L-aspartate binding site. Residues 222–224 (RDE) and glutamine 231 contribute to the ATP site. Histidine 450 is a binding site for L-aspartate. Residue glutamate 484 participates in ATP binding. Arginine 491 contributes to the L-aspartate binding site. ATP is bound at residue 536 to 539 (GLDR).

The protein belongs to the class-II aminoacyl-tRNA synthetase family. Type 1 subfamily. In terms of assembly, homodimer.

The protein resides in the cytoplasm. It catalyses the reaction tRNA(Asp) + L-aspartate + ATP = L-aspartyl-tRNA(Asp) + AMP + diphosphate. Catalyzes the attachment of L-aspartate to tRNA(Asp) in a two-step reaction: L-aspartate is first activated by ATP to form Asp-AMP and then transferred to the acceptor end of tRNA(Asp). This Macrococcus caseolyticus (strain JCSC5402) (Macrococcoides caseolyticum) protein is Aspartate--tRNA ligase.